The following is a 131-amino-acid chain: MLNDLISDGLTRIRNASMRRLDTTKLLHSNVVESVLKILAEKGYIESYNLIEEDNKKFINVVLKYNEHGKSAINEITKISKPGRRIYQTKDEIKRFKNGYGTVIVSTSKGVMSGIEASKAGVGGEVLCTVW.

The protein belongs to the universal ribosomal protein uS8 family. As to quaternary structure, part of the 30S ribosomal subunit. Contacts proteins S5 and S12.

Its function is as follows. One of the primary rRNA binding proteins, it binds directly to 16S rRNA central domain where it helps coordinate assembly of the platform of the 30S subunit. This is Small ribosomal subunit protein uS8 from Campylobacter hominis (strain ATCC BAA-381 / DSM 21671 / CCUG 45161 / LMG 19568 / NCTC 13146 / CH001A).